A 93-amino-acid polypeptide reads, in one-letter code: Small ribosomal subunit protein uS19 (93 aa).

This sequence belongs to the universal ribosomal protein uS19 family.

Protein S19 forms a complex with S13 that binds strongly to the 16S ribosomal RNA. This Frankia alni (strain DSM 45986 / CECT 9034 / ACN14a) protein is Small ribosomal subunit protein uS19.